A 240-amino-acid chain; its full sequence is MIINAKGPASFAEKYIVRSIWENKFPPGSILPAERELSELIGVTRTTLREVLQRLARDGWLTIQHGKPTRVNNFWETSGLNILETIADLNPEGFPVLVDQLLSARTNVSAIYFRGALRHNPETAVEILARIHGMEDSAEAYAEFDYDLHHTLAFSSGNPLYVLILNGFKGLYSRVGRYYFSSAEARKLAMDFYIELEKLAKRHAYGEVPALMRSYGINSGKMWQKLKDAMPADINQDPHG.

One can recognise an HTH gntR-type domain in the interval 6–74 (KGPASFAEKY…HGKPTRVNNF (69 aa)). The H-T-H motif DNA-binding region spans 34–53 (ERELSELIGVTRTTLREVLQ).

As to quaternary structure, homodimer.

Its subcellular location is the cytoplasm. In terms of biological role, multifunctional regulator of fatty acid metabolism. This Shewanella amazonensis (strain ATCC BAA-1098 / SB2B) protein is Fatty acid metabolism regulator protein.